We begin with the raw amino-acid sequence, 213 residues long: Redox-sensing transcriptional repressor Rex (213 aa).

The H-T-H motif DNA-binding region spans 18–57 (LYYRFVNTLKSKGIDRVNSKAISEGLNIDSATIRRDFSYF). An NAD(+)-binding site is contributed by 92 to 97 (GVGNLG).

Belongs to the transcriptional regulatory Rex family. As to quaternary structure, homodimer.

The protein resides in the cytoplasm. Functionally, modulates transcription in response to changes in cellular NADH/NAD(+) redox state. The polypeptide is Redox-sensing transcriptional repressor Rex (Staphylococcus saprophyticus subsp. saprophyticus (strain ATCC 15305 / DSM 20229 / NCIMB 8711 / NCTC 7292 / S-41)).